Here is a 170-residue protein sequence, read N- to C-terminus: Cathelicidin antimicrobial peptide (170 aa).

The first 30 residues, 1 to 30, serve as a signal peptide directing secretion; it reads MKTQRDGHSLGWWSLVLLLLGLVMPLAIIA. The propeptide at 31–131 is cathelin-like domain (CLD); that stretch reads QVLSYKEAVL…DISCDKDNKR (101 aa). 2 cysteine pairs are disulfide-bonded: C86–C97 and C108–C125. The active core stretch occupies residues 150 to 162; that stretch reads SKRIVQRIKDFLR.

Belongs to the cathelicidin family. As to quaternary structure, monomer, homodimer or homotrimer (in vitro). Oligomerizes as tetra- or hexamer in solution (in vitro). Proteolytically cleaved by proteinase PRTN3 into antibacterial peptide LL-37. Proteolytically cleaved by cathepsin CTSG and neutrophil elastase ELANE. Post-translationally, resistant to proteolytic degradation in solution, and when bound to both zwitterionic (mimicking mammalian membranes) and negatively charged membranes (mimicking bacterial membranes). In terms of processing, after secretion onto the skin surface, the CAMP gene product is processed by a serine protease-dependent mechanism into multiple novel antimicrobial peptides distinct from and shorter than cathelicidin LL-37. These peptides show enhanced antimicrobial action, acquiring the ability to kill skin pathogens such as S.aureus, E.coli and C.albicans. These peptides have lost the ability to stimulate CXCL8/IL8 release from keratinocytes. The peptides act synergistically, killing bacteria at lower concentrations when present together, and maintain activity at increased salt condition.

The protein localises to the secreted. Its subcellular location is the vesicle. In terms of biological role, antimicrobial protein that is an integral component of the innate immune system. Binds to bacterial lipopolysaccharides (LPS). Acts via neutrophil N-formyl peptide receptors to enhance the release of CXCL2. Postsecretory processing generates multiple cathelicidin antimicrobial peptides with various lengths which act as a topical antimicrobial defense in sweat on skin. The unprocessed precursor form, cathelicidin antimicrobial peptide, inhibits the growth of Gram-negative E.coli and E.aerogenes with efficiencies comparable to that of the mature peptide LL-37 (in vitro). Its function is as follows. Antimicrobial peptide that is an integral component of the innate immune system. Binds to bacterial lipopolysaccharides (LPS). Causes membrane permeabilization by forming transmembrane pores (in vitro). Causes lysis of E.coli. Exhibits antimicrobial activity against Gram-negative bacteria such as P.aeruginosa, S.typhimurium, E.aerogenes, E.coli and P.syringae, Gram-positive bacteria such as L.monocytogenes, S.epidermidis, S.pyogenes and S.aureus, as well as vancomycin-resistant enterococci (in vitro). Exhibits antimicrobial activity against methicillin-resistant S.aureus, P.mirabilis, and C.albicans in low-salt media, but not in media containing 100 mM NaCl (in vitro). Forms chiral supramolecular assemblies with quinolone signal (PQS) molecules of P.aeruginosa, which may lead to interference of bacterial quorum signaling and perturbance of bacterial biofilm formation. May form supramolecular fiber-like assemblies on bacterial membranes. Induces cytokine and chemokine producation as well as TNF/TNFA and CSF2/GMCSF production in normal human keratinocytes. Exhibits hemolytic activity against red blood cells. Functionally, exhibits antimicrobial activity against E.coli and B.megaterium (in vitro). This chain is Cathelicidin antimicrobial peptide, found in Gorilla gorilla gorilla (Western lowland gorilla).